Reading from the N-terminus, the 400-residue chain is Glutamyl-tRNA reductase (400 aa).

Residues 45–48 (TCNR), Ser103, 108–110 (EDQ), and Gln114 each bind substrate. The Nucleophile role is filled by Cys46. Position 179–184 (179–184 (GYGEIG)) interacts with NADP(+).

It belongs to the glutamyl-tRNA reductase family. In terms of assembly, homodimer.

The enzyme catalyses (S)-4-amino-5-oxopentanoate + tRNA(Glu) + NADP(+) = L-glutamyl-tRNA(Glu) + NADPH + H(+). It participates in porphyrin-containing compound metabolism; protoporphyrin-IX biosynthesis; 5-aminolevulinate from L-glutamyl-tRNA(Glu): step 1/2. Functionally, catalyzes the NADPH-dependent reduction of glutamyl-tRNA(Glu) to glutamate 1-semialdehyde (GSA). This Clostridium perfringens (strain 13 / Type A) protein is Glutamyl-tRNA reductase.